We begin with the raw amino-acid sequence, 235 residues long: LexA repressor (235 aa).

The segment at residues 26 to 46 (FDEMKDALDLKSKSGIHRLIT) is a DNA-binding region (H-T-H motif). Active-site for autocatalytic cleavage activity residues include Ser-156 and Lys-194.

This sequence belongs to the peptidase S24 family. As to quaternary structure, homodimer.

The catalysed reaction is Hydrolysis of Ala-|-Gly bond in repressor LexA.. In terms of biological role, represses a number of genes involved in the response to DNA damage (SOS response), including recA and lexA. In the presence of single-stranded DNA, RecA interacts with LexA causing an autocatalytic cleavage which disrupts the DNA-binding part of LexA, leading to derepression of the SOS regulon and eventually DNA repair. This Paramagnetospirillum magneticum (strain ATCC 700264 / AMB-1) (Magnetospirillum magneticum) protein is LexA repressor.